Here is a 74-residue protein sequence, read N- to C-terminus: Conotoxin Cal27 (74 aa).

The signal sequence occupies residues 1 to 19 (MSGTGVLLLTLLLLVAMAA).

May contain 4 disulfide bonds. In terms of tissue distribution, expressed by the venom duct.

It is found in the secreted. Probable neurotoxin. The protein is Conotoxin Cal27 of Californiconus californicus (California cone).